A 114-amino-acid chain; its full sequence is Somatostatin-1A (114 aa).

A signal peptide spans 1–24 (MLSTRIQCALALLSLALAVCSVSA). Residues 25-88 (APTDAKLRQL…KDEVRLELER (64 aa)) constitute a propeptide that is removed on maturation. An intrachain disulfide couples cysteine 103 to cysteine 114.

The protein belongs to the somatostatin family.

The protein localises to the secreted. Its function is as follows. Somatostatin inhibits the release of somatotropin. This is Somatostatin-1A (sst1a) from Carassius auratus (Goldfish).